Consider the following 372-residue polypeptide: Glutamate 5-kinase (372 aa).

K14 provides a ligand contact to ATP. Residues S54, D141, and N153 each contribute to the substrate site. ATP-binding positions include 173–174 and 215–221; these read TD and TGGMITK. One can recognise a PUA domain in the interval 280-358; sequence AGRLLLDDGA…REIEAALGYI (79 aa).

The protein belongs to the glutamate 5-kinase family.

Its subcellular location is the cytoplasm. The catalysed reaction is L-glutamate + ATP = L-glutamyl 5-phosphate + ADP. Its pathway is amino-acid biosynthesis; L-proline biosynthesis; L-glutamate 5-semialdehyde from L-glutamate: step 1/2. In terms of biological role, catalyzes the transfer of a phosphate group to glutamate to form L-glutamate 5-phosphate. This chain is Glutamate 5-kinase, found in Chromobacterium violaceum (strain ATCC 12472 / DSM 30191 / JCM 1249 / CCUG 213 / NBRC 12614 / NCIMB 9131 / NCTC 9757 / MK).